We begin with the raw amino-acid sequence, 73 residues long: Disintegrin trigramin-beta-2 (73 aa).

Residues 1–73 (EAGKDCDCGS…AGCPRNPFHA (73 aa)) enclose the Disintegrin domain. 6 disulfide bridges follow: C6-C21, C8-C16, C15-C38, C29-C35, C34-C59, and C47-C66. A Cell attachment site motif is present at residues 51 to 53 (RGD).

It belongs to the venom metalloproteinase (M12B) family. P-II subfamily. P-IIa sub-subfamily. Monomer (disintegrin). In terms of tissue distribution, expressed by the venom gland.

The protein resides in the secreted. Its function is as follows. Inhibits fibrinogen interaction with platelets. Acts by binding to the alpha-IIb/beta-3 receptor (ITGA2B/ITGB3) on the platelet surface and inhibits aggregation induced by ADP, thrombin, platelet-activating factor and collagen. This chain is Disintegrin trigramin-beta-2, found in Craspedocephalus gramineus (Bamboo pit viper).